Reading from the N-terminus, the 426-residue chain is 3-phosphoshikimate 1-carboxyvinyltransferase (426 aa).

The 3-phosphoshikimate site is built by Lys22, Ser23, and Arg27. Lys22 contributes to the phosphoenolpyruvate binding site. Gly96 and Arg124 together coordinate phosphoenolpyruvate. 3-phosphoshikimate-binding residues include Ser170, Ser171, Gln172, Ser198, Asp314, Asn337, and Lys341. Gln172 contacts phosphoenolpyruvate. The active-site Proton acceptor is Asp314. Arg345, Arg387, and Lys412 together coordinate phosphoenolpyruvate.

Belongs to the EPSP synthase family. In terms of assembly, monomer.

The protein resides in the cytoplasm. It catalyses the reaction 3-phosphoshikimate + phosphoenolpyruvate = 5-O-(1-carboxyvinyl)-3-phosphoshikimate + phosphate. The protein operates within metabolic intermediate biosynthesis; chorismate biosynthesis; chorismate from D-erythrose 4-phosphate and phosphoenolpyruvate: step 6/7. Functionally, catalyzes the transfer of the enolpyruvyl moiety of phosphoenolpyruvate (PEP) to the 5-hydroxyl of shikimate-3-phosphate (S3P) to produce enolpyruvyl shikimate-3-phosphate and inorganic phosphate. This chain is 3-phosphoshikimate 1-carboxyvinyltransferase, found in Shewanella sediminis (strain HAW-EB3).